The chain runs to 235 residues: uncharacterized protein (235 aa).

The 68-residue stretch at 2–69 (CRLAKIISNA…KPRLWIYYKP (68 aa)) folds into the S4 RNA-binding domain. Residue D102 is the Nucleophile of the active site.

The protein belongs to the pseudouridine synthase RsuA family.

It catalyses the reaction a uridine in RNA = a pseudouridine in RNA. This is an uncharacterized protein from Rickettsia prowazekii (strain Madrid E).